A 95-amino-acid polypeptide reads, in one-letter code: Small ribosomal subunit protein bS20 (95 aa).

This sequence belongs to the bacterial ribosomal protein bS20 family.

Functionally, binds directly to 16S ribosomal RNA. The polypeptide is Small ribosomal subunit protein bS20 (Ehrlichia ruminantium (strain Gardel)).